We begin with the raw amino-acid sequence, 143 residues long: Large ribosomal subunit protein uL11 (143 aa).

It belongs to the universal ribosomal protein uL11 family. In terms of assembly, part of the ribosomal stalk of the 50S ribosomal subunit. Interacts with L10 and the large rRNA to form the base of the stalk. L10 forms an elongated spine to which L12 dimers bind in a sequential fashion forming a multimeric L10(L12)X complex. In terms of processing, one or more lysine residues are methylated.

In terms of biological role, forms part of the ribosomal stalk which helps the ribosome interact with GTP-bound translation factors. The polypeptide is Large ribosomal subunit protein uL11 (Ralstonia nicotianae (strain ATCC BAA-1114 / GMI1000) (Ralstonia solanacearum)).